Here is a 196-residue protein sequence, read N- to C-terminus: Ribonuclease S-F11 (196 aa).

Cysteines 16 and 21 form a disulfide. N-linked (GlcNAc...) asparagine glycosylation occurs at Asn28. His32 serves as the catalytic Proton donor. RNA-binding positions include His32 and Gln69–Leu70. Intrachain disulfides connect Cys46–Cys94, Cys153–Cys186, and Cys169–Cys180. The active site involves Gln87. Lys90–His91 serves as a coordination point for RNA. The active-site Proton acceptor is the His91.

It belongs to the RNase T2 family. Monomer.

Its subcellular location is the secreted. The protein resides in the extracellular space. It carries out the reaction a ribonucleotidyl-ribonucleotide-RNA + H2O = a 3'-end 3'-phospho-ribonucleotide-RNA + a 5'-end dephospho-ribonucleoside-RNA + H(+). Its function is as follows. Self-incompatibility (SI) is the inherited ability of a flowering plant to prevent self-fertilization by discriminating between self and non-self pollen during pollination. In many species of the Solanaceae, self-incompatibility is controlled by the single, multiallelic locus S. The sequence is that of Ribonuclease S-F11 from Nicotiana alata (Winged tobacco).